Consider the following 238-residue polypeptide: Histone deacetylase 7 (238 aa).

2 disordered regions span residues 1 to 26 and 47 to 72; these read TPGSQPQPMDLRVGQRPTVEPPPEPA and QQQRSAEPMRLSMDPPLPELQGGQQE. Positions 58–158 are interaction with MEF2A; the sequence is SMDPPLPELQ…LPTEPPEHFP (101 aa). Residues Ser118 and Ser164 each carry the phosphoserine modification. Positions 145-238 are disordered; sequence PVPSLPTEPP…NPALGSEADG (94 aa). A compositionally biased stretch (basic and acidic residues) spans 176-190; that stretch reads KSLERRKNPLLRKES. The residue at position 190 (Ser190) is a Phosphoserine; by PKD/PRKD2. Residues 206 to 221 show a composition bias toward low complexity; it reads SSPSSSSTPASGCSSP.

The protein belongs to the histone deacetylase family. HD type 2 subfamily. In terms of assembly, interacts with HDAC1, HDAC2, HDAC3, HDAC4, HDAC5, NCOR1, NCOR2, SIN3A, SIN3B, RBBP4, RBBP7, MTA1L1, SAP30 and MBD3. Interacts with KAT5 and EDNRA. Interacts with the 14-3-3 protein YWHAE, MEF2A, MEF2B and MEF2C. Interacts with ZMYND15. Interacts with KDM5B. Interacts with PML. Interacts with FOXP3. Interacts with RARA. May be phosphorylated by CaMK1. Phosphorylated by the PKC kinases PKN1 and PKN2, impairing nuclear import. Phosphorylation at Ser-164 by MARK2, MARK3 and PRKD1 promotes interaction with 14-3-3 proteins and export from the nucleus. Phosphorylation at Ser-164 is a prerequisite for phosphorylation at Ser-190.

The protein localises to the nucleus. The protein resides in the cytoplasm. The catalysed reaction is N(6)-acetyl-L-lysyl-[histone] + H2O = L-lysyl-[histone] + acetate. It carries out the reaction N(6)-acetyl-L-lysyl-[protein] + H2O = L-lysyl-[protein] + acetate. In terms of biological role, responsible for the deacetylation of lysine residues on the N-terminal part of the core histones (H2A, H2B, H3 and H4). Histone deacetylation gives a tag for epigenetic repression and plays an important role in transcriptional regulation, cell cycle progression and developmental events. Histone deacetylases act via the formation of large multiprotein complexes. Involved in muscle maturation by repressing transcription of myocyte enhancer factors such as MEF2A, MEF2B and MEF2C. During muscle differentiation, it shuttles into the cytoplasm, allowing the expression of myocyte enhancer factors. May be involved in Epstein-Barr virus (EBV) latency, possibly by repressing the viral BZLF1 gene. Positively regulates the transcriptional repressor activity of FOXP3. Serves as a corepressor of RARA, causing its deacetylation and inhibition of RARE DNA element binding. In association with RARA, plays a role in the repression of microRNA-10a and thereby in the inflammatory response. Also acetylates non-histone proteins, such as ALKBH5. The polypeptide is Histone deacetylase 7 (Hdac7) (Rattus norvegicus (Rat)).